A 173-amino-acid polypeptide reads, in one-letter code: Photosystem I assembly protein Ycf3 (173 aa).

TPR repeat units follow at residues 35-68 (AFVY…EEDT), 72-105 (GYIL…NPRL), and 120-153 (GEKA…APNN).

It belongs to the Ycf3 family.

Its subcellular location is the cellular thylakoid membrane. Its function is as follows. Essential for the assembly of the photosystem I (PSI) complex. May act as a chaperone-like factor to guide the assembly of the PSI subunits. The sequence is that of Photosystem I assembly protein Ycf3 from Trichormus variabilis (strain ATCC 29413 / PCC 7937) (Anabaena variabilis).